The following is a 61-amino-acid chain: Protein CopA/IncA (61 aa).

Functionally, controls the copy number in gene replication. In Escherichia coli, this protein is Protein CopA/IncA (copA).